The chain runs to 666 residues: Chaperone protein HtpG (666 aa).

Residues 1–374 form an a; substrate-binding region; it reads MSELNPVDNQ…SADLPLNVSR (374 aa). Residues 375–593 form a b region; that stretch reads ELLQESRDVK…EGELSPQMIQ (219 aa). Residues 594 to 666 are c; sequence MLKQMGQDVP…LRRVNELLMR (73 aa).

It belongs to the heat shock protein 90 family. Homodimer.

It is found in the cytoplasm. Functionally, molecular chaperone. Has ATPase activity. The chain is Chaperone protein HtpG from Psychrobacter cryohalolentis (strain ATCC BAA-1226 / DSM 17306 / VKM B-2378 / K5).